A 497-amino-acid chain; its full sequence is Serine/threonine protein phosphatase 2A 57 kDa regulatory subunit B' epsilon isoform (497 aa).

Residues 12–71 (KFNKSDQHHQDNNNNNNNTSTNTVVRGSRTTTPAPSSVSNGESQTTAQSPSQTPNHPMFT) are disordered. Over residues 23 to 34 (NNNNNNNTSTNT) the composition is skewed to low complexity. Over residues 35 to 71 (VVRGSRTTTPAPSSVSNGESQTTAQSPSQTPNHPMFT) the composition is skewed to polar residues.

It belongs to the phosphatase 2A regulatory subunit B56 family. PP2A consists of a common heteromeric enzyme, composed of a catalytic subunit (subunits C), a constant regulatory subunit (subunit A), and a variety of regulatory subunits such as subunits B (the R2/B/PR55/B55, R3/B''/PR72/PR130/PR59 and R5/B'/B56 families). Expressed ubiquitously.

The protein localises to the cytoplasm. The B regulatory subunit may modulate substrate selectivity and catalytic activity, and may also direct the localization of the catalytic enzyme to a particular subcellular compartment. The chain is Serine/threonine protein phosphatase 2A 57 kDa regulatory subunit B' epsilon isoform (B'EPSILON) from Arabidopsis thaliana (Mouse-ear cress).